The following is a 160-amino-acid chain: Large ribosomal subunit protein uL11 (160 aa).

This sequence belongs to the universal ribosomal protein uL11 family. In terms of assembly, part of the ribosomal stalk of the 50S ribosomal subunit. Interacts with L10 and the large rRNA to form the base of the stalk. L10 forms an elongated spine to which L12 dimers bind in a sequential fashion forming a multimeric L10(L12)X complex.

Functionally, forms part of the ribosomal stalk which helps the ribosome interact with GTP-bound translation factors. This is Large ribosomal subunit protein uL11 from Methanothermobacter thermautotrophicus (strain ATCC 29096 / DSM 1053 / JCM 10044 / NBRC 100330 / Delta H) (Methanobacterium thermoautotrophicum).